The primary structure comprises 352 residues: DNA polymerase IV (352 aa).

The UmuC domain maps to 6–186; that stretch reads IIHIDMDAFY…LPLGKIPGVG (181 aa). Positions 10 and 104 each coordinate Mg(2+). E105 is a catalytic residue.

The protein belongs to the DNA polymerase type-Y family. As to quaternary structure, monomer. Requires Mg(2+) as cofactor.

It localises to the cytoplasm. It catalyses the reaction DNA(n) + a 2'-deoxyribonucleoside 5'-triphosphate = DNA(n+1) + diphosphate. Its function is as follows. Poorly processive, error-prone DNA polymerase involved in untargeted mutagenesis. Copies undamaged DNA at stalled replication forks, which arise in vivo from mismatched or misaligned primer ends. These misaligned primers can be extended by PolIV. Exhibits no 3'-5' exonuclease (proofreading) activity. May be involved in translesional synthesis, in conjunction with the beta clamp from PolIII. This is DNA polymerase IV from Neisseria meningitidis serogroup A / serotype 4A (strain DSM 15465 / Z2491).